The sequence spans 213 residues: Thymidylate kinase (213 aa).

ATP is bound at residue Gly-11–Thr-18.

Belongs to the thymidylate kinase family.

It catalyses the reaction dTMP + ATP = dTDP + ADP. In terms of biological role, phosphorylation of dTMP to form dTDP in both de novo and salvage pathways of dTTP synthesis. This chain is Thymidylate kinase, found in Leuconostoc mesenteroides subsp. mesenteroides (strain ATCC 8293 / DSM 20343 / BCRC 11652 / CCM 1803 / JCM 6124 / NCDO 523 / NBRC 100496 / NCIMB 8023 / NCTC 12954 / NRRL B-1118 / 37Y).